We begin with the raw amino-acid sequence, 84 residues long: Delta-thalatoxin-Tas1a (84 aa).

Positions 1–19 (MAYLKIVLVALMLVLAVSA) are cleaved as a signal peptide. A propeptide spanning residues 20-33 (MRRPDQQDQDISVA) is cleaved from the precursor. Cystine bridges form between Cys38-Cys78, Cys40-Cys68, and Cys61-Cys79.

Belongs to the sea anemone sodium channel inhibitory toxin family. Type II subfamily.

It localises to the secreted. Its subcellular location is the nematocyst. Binds specifically to the voltage-gated sodium channel (Nav) and delays its inactivation. The protein is Delta-thalatoxin-Tas1a of Thalassianthus aster (Fuzzy-tipped anemone).